The chain runs to 144 residues: Large ribosomal subunit protein uL14 (144 aa).

The protein belongs to the universal ribosomal protein uL14 family. As to quaternary structure, part of the 50S ribosomal subunit. Forms a cluster with proteins L3 and L24e, part of which may contact the 16S rRNA in 2 intersubunit bridges.

Functionally, binds to 23S rRNA. Forms part of two intersubunit bridges in the 70S ribosome. The protein is Large ribosomal subunit protein uL14 of Pyrobaculum arsenaticum (strain DSM 13514 / JCM 11321 / PZ6).